The following is a 424-amino-acid chain: Glutamyl-tRNA reductase (424 aa).

Substrate contacts are provided by residues 49 to 52 (TCNR), Ser-105, 110 to 112 (EPQ), and Gln-116. The active-site Nucleophile is the Cys-50. 185 to 190 (GSGETA) is an NADP(+) binding site.

It belongs to the glutamyl-tRNA reductase family. As to quaternary structure, homodimer.

It catalyses the reaction (S)-4-amino-5-oxopentanoate + tRNA(Glu) + NADP(+) = L-glutamyl-tRNA(Glu) + NADPH + H(+). It functions in the pathway porphyrin-containing compound metabolism; protoporphyrin-IX biosynthesis; 5-aminolevulinate from L-glutamyl-tRNA(Glu): step 1/2. Catalyzes the NADPH-dependent reduction of glutamyl-tRNA(Glu) to glutamate 1-semialdehyde (GSA). The sequence is that of Glutamyl-tRNA reductase from Legionella pneumophila (strain Lens).